Reading from the N-terminus, the 133-residue chain is Glycophorin-A (133 aa).

2 O-linked (GalNAc...) threonine glycosylation sites follow: threonine 1 and threonine 6. The interval 1–34 is disordered; it reads TETPVTGEQGSATPGNVSNATVTAGKPSATSPGV. The Extracellular portion of the chain corresponds to 1–62; that stretch reads TETPVTGEQG…SYHQDFSHAE (62 aa). Serine 11 is a glycosylation site (O-linked (GalNAc...) serine). A glycan (O-linked (GalNAc...) threonine) is linked at threonine 13. An N-linked (GlcNAc...) asparagine glycan is attached at asparagine 19. O-linked (GalNAc...) threonine glycans are attached at residues threonine 21, threonine 23, and threonine 30. Serine 31 is a glycosylation site (O-linked (GalNAc...) serine). Asparagine 39 is a glycosylation site (N-linked (GlcNAc...) asparagine). O-linked (GalNAc...) threonine glycosylation is found at threonine 41 and threonine 48. The helical transmembrane segment at 63 to 85 threads the bilayer; sequence ITGIIFAVMAGLLLIIFLIAYLI. The Cytoplasmic portion of the chain corresponds to 86-133; it reads RRMIKKPLPVPKPQDSPDIGTENTADPSELQDTEDPPLTSVEIETPAS. Positions 93–133 are disordered; sequence LPVPKPQDSPDIGTENTADPSELQDTEDPPLTSVEIETPAS.

This sequence belongs to the glycophorin-A family. Homodimer. Component of the ankyrin-1 complex in the erythrocyte, composed of ANK1, RHCE, RHAG, SLC4A1, EPB42, GYPA, GYPB and AQP1. Interacts with SLC4A1; a GYPA monomer is bound at each end of the SLC4A1 dimer forming a heterotetramer.

The protein resides in the membrane. In terms of biological role, component of the ankyrin-1 complex, a multiprotein complex involved in the stability and shape of the erythrocyte membrane. Glycophorin A is the major intrinsic membrane protein of the erythrocyte. The N-terminal glycosylated segment, which lies outside the erythrocyte membrane, has MN blood group receptors. Appears to be important for the function of SLC4A1 and is required for high activity of SLC4A1. May be involved in translocation of SLC4A1 to the plasma membrane. This is Glycophorin-A from Sus scrofa (Pig).